Reading from the N-terminus, the 218-residue chain is Peptidase E (218 aa).

Active-site charge relay system residues include serine 123, aspartate 138, and histidine 160.

Belongs to the peptidase S51 family.

Its subcellular location is the cytoplasm. The enzyme catalyses Dipeptidase E catalyzes the hydrolysis of dipeptides Asp-|-Xaa. It does not act on peptides with N-terminal Glu, Asn or Gln, nor does it cleave isoaspartyl peptides.. Hydrolyzes dipeptides containing N-terminal aspartate residues. May play a role in allowing the cell to use peptide aspartate to spare carbon otherwise required for the synthesis of the aspartate family of amino acids. In Haemophilus influenzae (strain ATCC 51907 / DSM 11121 / KW20 / Rd), this protein is Peptidase E.